The following is a 218-amino-acid chain: tRNA (cytidine(56)-2'-O)-methyltransferase (218 aa).

S-adenosyl-L-methionine is bound by residues Leu-81, 106–110, and 124–131; these read GAEKV and IGNQPHSE. A disordered region spans residues 170–218; sequence KVGEEGPSGGAPGVRAERGRGGRGEGVQGADEVRGHKRGATDRDLGDET. Positions 200–218 are enriched in basic and acidic residues; the sequence is DEVRGHKRGATDRDLGDET.

This sequence belongs to the aTrm56 family. In terms of assembly, homodimer.

It localises to the cytoplasm. The enzyme catalyses cytidine(56) in tRNA + S-adenosyl-L-methionine = 2'-O-methylcytidine(56) in tRNA + S-adenosyl-L-homocysteine + H(+). In terms of biological role, specifically catalyzes the AdoMet-dependent 2'-O-ribose methylation of cytidine at position 56 in tRNAs. In Ignicoccus hospitalis (strain KIN4/I / DSM 18386 / JCM 14125), this protein is tRNA (cytidine(56)-2'-O)-methyltransferase.